We begin with the raw amino-acid sequence, 552 residues long: Dihydroxy-acid dehydratase (552 aa).

D78 is a binding site for Mg(2+). C119 lines the [2Fe-2S] cluster pocket. Residues D120 and K121 each contribute to the Mg(2+) site. Residue K121 is modified to N6-carboxylysine. Residue C191 coordinates [2Fe-2S] cluster. E442 is a Mg(2+) binding site. S468 functions as the Proton acceptor in the catalytic mechanism.

The protein belongs to the IlvD/Edd family. Homodimer. The cofactor is [2Fe-2S] cluster. It depends on Mg(2+) as a cofactor.

It catalyses the reaction (2R)-2,3-dihydroxy-3-methylbutanoate = 3-methyl-2-oxobutanoate + H2O. The enzyme catalyses (2R,3R)-2,3-dihydroxy-3-methylpentanoate = (S)-3-methyl-2-oxopentanoate + H2O. It participates in amino-acid biosynthesis; L-isoleucine biosynthesis; L-isoleucine from 2-oxobutanoate: step 3/4. It functions in the pathway amino-acid biosynthesis; L-valine biosynthesis; L-valine from pyruvate: step 3/4. Functions in the biosynthesis of branched-chain amino acids. Catalyzes the dehydration of (2R,3R)-2,3-dihydroxy-3-methylpentanoate (2,3-dihydroxy-3-methylvalerate) into 2-oxo-3-methylpentanoate (2-oxo-3-methylvalerate) and of (2R)-2,3-dihydroxy-3-methylbutanoate (2,3-dihydroxyisovalerate) into 2-oxo-3-methylbutanoate (2-oxoisovalerate), the penultimate precursor to L-isoleucine and L-valine, respectively. The polypeptide is Dihydroxy-acid dehydratase (Clostridium botulinum (strain Alaska E43 / Type E3)).